We begin with the raw amino-acid sequence, 138 residues long: UPF0355 protein SSP2326 (138 aa).

Residues 115-138 (NVAFETNQTKSNSHYSEETNGPKS) are disordered. Over residues 118-138 (FETNQTKSNSHYSEETNGPKS) the composition is skewed to polar residues.

This sequence belongs to the UPF0355 family.

The sequence is that of UPF0355 protein SSP2326 from Staphylococcus saprophyticus subsp. saprophyticus (strain ATCC 15305 / DSM 20229 / NCIMB 8711 / NCTC 7292 / S-41).